The chain runs to 309 residues: Tagatose-6-phosphate kinase (309 aa).

It belongs to the carbohydrate kinase PfkB family. LacC subfamily.

The catalysed reaction is D-tagatofuranose 6-phosphate + ATP = D-tagatofuranose 1,6-bisphosphate + ADP + H(+). It participates in carbohydrate metabolism; D-tagatose 6-phosphate degradation; D-glyceraldehyde 3-phosphate and glycerone phosphate from D-tagatose 6-phosphate: step 1/2. The chain is Tagatose-6-phosphate kinase from Streptococcus pneumoniae (strain Taiwan19F-14).